A 65-amino-acid polypeptide reads, in one-letter code: Large ribosomal subunit protein uL29 (65 aa).

Belongs to the universal ribosomal protein uL29 family.

The chain is Large ribosomal subunit protein uL29 from Xylella fastidiosa (strain Temecula1 / ATCC 700964).